Reading from the N-terminus, the 114-residue chain is Peroxisomal biogenesis factor 39 (114 aa).

Disordered regions lie at residues 1–26 (MSWW…AEPA) and 53–114 (ITAT…PRVS). Residue serine 102 is modified to Phosphoserine.

It localises to the peroxisome. Its function is as follows. May be a peroxin involved in the PTS2-mediated protein import pathway. The chain is Peroxisomal biogenesis factor 39 (Pex39) from Mus musculus (Mouse).